The sequence spans 97 residues: Small ribosomal subunit protein uS19 (97 aa).

Belongs to the universal ribosomal protein uS19 family.

Protein S19 forms a complex with S13 that binds strongly to the 16S ribosomal RNA. The polypeptide is Small ribosomal subunit protein uS19 (Pelagibacter ubique (strain HTCC1062)).